The primary structure comprises 123 residues: Methicillin resistance regulatory protein MecI (123 aa).

Residues 7–71 constitute a DNA-binding region (H-T-H motif); it reads EISSAEWEVM…KDNKIFQYYS (65 aa). The tract at residues 74 to 123 is important for dimerization; the sequence is EESDIKYKTSKNFINKVYKGGFNSLVLNFVEKEDLSQDEIEELRNILNKK.

It belongs to the BlaI transcriptional regulatory family. In terms of assembly, monomer and homodimer. Upon exposure to beta-lactams, proteolytic cleavage at a single site impairs dimerization and abolishes repressor activity.

It is found in the cytoplasm. Functionally, transcriptional repressor that constitutively blocks the transcription of the gene for the penicillin-binding protein MecA. Binds palindromic DNA with the sequence 5'-TACA-[AT]-N-TGTA-3'. Regulates genes involved in antibiotic resistance. Binds DNA as a dimer. The protein is Methicillin resistance regulatory protein MecI (mecI) of Staphylococcus aureus (strain N315).